Here is a 1402-residue protein sequence, read N- to C-terminus: DNA-directed RNA polymerase subunit beta' (1402 aa).

Zn(2+) contacts are provided by Cys-71, Cys-73, Cys-86, and Cys-89. Mg(2+) is bound by residues Asp-462, Asp-464, and Asp-466. Cys-808, Cys-881, Cys-888, and Cys-891 together coordinate Zn(2+).

Belongs to the RNA polymerase beta' chain family. The RNAP catalytic core consists of 2 alpha, 1 beta, 1 beta' and 1 omega subunit. When a sigma factor is associated with the core the holoenzyme is formed, which can initiate transcription. Mg(2+) serves as cofactor. It depends on Zn(2+) as a cofactor.

The enzyme catalyses RNA(n) + a ribonucleoside 5'-triphosphate = RNA(n+1) + diphosphate. Its function is as follows. DNA-dependent RNA polymerase catalyzes the transcription of DNA into RNA using the four ribonucleoside triphosphates as substrates. The chain is DNA-directed RNA polymerase subunit beta' from Hyphomonas neptunium (strain ATCC 15444).